The sequence spans 155 residues: uncharacterized protein (155 aa).

An N-terminal signal peptide occupies residues 1 to 24 (MQQLSKRRLSALFVTAFLPVTAFA).

This is an uncharacterized protein from Chromohalobacter salexigens (strain ATCC BAA-138 / DSM 3043 / CIP 106854 / NCIMB 13768 / 1H11).